Reading from the N-terminus, the 440-residue chain is Probable exopolygalacturonase B (440 aa).

An N-terminal signal peptide occupies residues 1-20 (MRLHFLPLVALCATTASSLA). N-linked (GlcNAc...) asparagine glycosylation is found at Asn65, Asn190, and Asn230. Asp260 functions as the Proton donor in the catalytic mechanism. Residues Cys262 and Cys279 are joined by a disulfide bond. N-linked (GlcNAc...) asparagine glycans are attached at residues Asn268 and Asn280. His283 is a catalytic residue. N-linked (GlcNAc...) asparagine glycosylation is found at Asn307, Asn334, and Asn371. Cys397 and Cys403 are disulfide-bonded. The N-linked (GlcNAc...) asparagine glycan is linked to Asn412.

The protein belongs to the glycosyl hydrolase 28 family.

It is found in the secreted. It carries out the reaction [(1-&gt;4)-alpha-D-galacturonosyl](n) + H2O = alpha-D-galacturonate + [(1-&gt;4)-alpha-D-galacturonosyl](n-1). In terms of biological role, specific in hydrolyzing the terminal glycosidic bond of polygalacturonic acid and oligogalacturonates. This chain is Probable exopolygalacturonase B (pgxB), found in Emericella nidulans (strain FGSC A4 / ATCC 38163 / CBS 112.46 / NRRL 194 / M139) (Aspergillus nidulans).